We begin with the raw amino-acid sequence, 156 residues long: Small ribosomal subunit protein bS16 (156 aa).

Residues 114-156 (ENEPVAEAITPKKKKAAKADEAKAEDTAADAEAPAADAEAADK) are disordered. A compositionally biased stretch (basic and acidic residues) spans 130–139 (AKADEAKAED). Positions 143–156 (DAEAPAADAEAADK) are enriched in low complexity.

Belongs to the bacterial ribosomal protein bS16 family.

This chain is Small ribosomal subunit protein bS16, found in Rhodococcus erythropolis (strain PR4 / NBRC 100887).